A 607-amino-acid chain; its full sequence is ATP-dependent RNA helicase DBP6 (607 aa).

The tract at residues 1-83 (MFAARFDPSR…GTGEADKRHQ (83 aa)) is disordered. Positions 34-59 (QDESESEMSSAESEDEAMQLDDEEEV) are enriched in acidic residues. Basic and acidic residues predominate over residues 60–69 (VDSKGKENHG). Positions 184–192 (AFPIQTALL) match the Q motif motif. In terms of domain architecture, Helicase ATP-binding spans 208–388 (RYYTRKVGDI…DLQLHNPKLF (181 aa)). Position 221-228 (221-228 (ASTGSGKT)) interacts with ATP. Positions 328-331 (DEAD) match the DEAD box motif. A Helicase C-terminal domain is found at 419-578 (ILLRLLPLLS…GSHLFFDEEQ (160 aa)).

This sequence belongs to the DEAD box helicase family. DDX51/DBP6 subfamily. As to quaternary structure, associated with pre-ribosomal particles.

The protein resides in the nucleus. The protein localises to the nucleolus. The enzyme catalyses ATP + H2O = ADP + phosphate + H(+). Its function is as follows. ATP-binding RNA helicase involved in the biogenesis of 60S ribosomal subunits and is required for the normal formation of 25S and 5.8S rRNAs. The sequence is that of ATP-dependent RNA helicase DBP6 (DBP6) from Eremothecium gossypii (strain ATCC 10895 / CBS 109.51 / FGSC 9923 / NRRL Y-1056) (Yeast).